The primary structure comprises 361 residues: Probable dual-specificity RNA methyltransferase RlmN (361 aa).

The Proton acceptor role is filled by glutamate 102. In terms of domain architecture, Radical SAM core spans 108-344; the sequence is SGDRLTVCVS…VRWSKGLGAD (237 aa). Cysteine 115 and cysteine 347 are joined by a disulfide. Residues cysteine 122, cysteine 126, and cysteine 129 each coordinate [4Fe-4S] cluster. S-adenosyl-L-methionine contacts are provided by residues 169-170, serine 199, 228-230, and asparagine 304; these read GE and SLH. Catalysis depends on cysteine 347, which acts as the S-methylcysteine intermediate.

The protein belongs to the radical SAM superfamily. RlmN family. [4Fe-4S] cluster is required as a cofactor.

The protein localises to the cytoplasm. It carries out the reaction adenosine(2503) in 23S rRNA + 2 reduced [2Fe-2S]-[ferredoxin] + 2 S-adenosyl-L-methionine = 2-methyladenosine(2503) in 23S rRNA + 5'-deoxyadenosine + L-methionine + 2 oxidized [2Fe-2S]-[ferredoxin] + S-adenosyl-L-homocysteine. The catalysed reaction is adenosine(37) in tRNA + 2 reduced [2Fe-2S]-[ferredoxin] + 2 S-adenosyl-L-methionine = 2-methyladenosine(37) in tRNA + 5'-deoxyadenosine + L-methionine + 2 oxidized [2Fe-2S]-[ferredoxin] + S-adenosyl-L-homocysteine. In terms of biological role, specifically methylates position 2 of adenine 2503 in 23S rRNA and position 2 of adenine 37 in tRNAs. The protein is Probable dual-specificity RNA methyltransferase RlmN of Synechococcus elongatus (strain ATCC 33912 / PCC 7942 / FACHB-805) (Anacystis nidulans R2).